Here is a 118-residue protein sequence, read N- to C-terminus: uncharacterized protein (118 aa).

The interval 98 to 118 (KGKGNEGREEAEEPLEEPEEG) is disordered. Residues 106–118 (EEAEEPLEEPEEG) show a composition bias toward acidic residues.

The protein belongs to the UPF0440 family.

This is an uncharacterized protein from Pyrococcus abyssi (strain GE5 / Orsay).